The primary structure comprises 154 residues: Endoribonuclease YbeY (154 aa).

Zn(2+)-binding residues include histidine 113, histidine 117, and histidine 123.

It belongs to the endoribonuclease YbeY family. Requires Zn(2+) as cofactor.

The protein localises to the cytoplasm. In terms of biological role, single strand-specific metallo-endoribonuclease involved in late-stage 70S ribosome quality control and in maturation of the 3' terminus of the 16S rRNA. This Aeromonas salmonicida (strain A449) protein is Endoribonuclease YbeY.